The following is a 451-amino-acid chain: Phosphoglucosamine mutase (451 aa).

The active-site Phosphoserine intermediate is S102. The Mg(2+) site is built by S102, D243, D245, and D247. S102 is modified (phosphoserine).

Belongs to the phosphohexose mutase family. Mg(2+) serves as cofactor. In terms of processing, activated by phosphorylation.

It catalyses the reaction alpha-D-glucosamine 1-phosphate = D-glucosamine 6-phosphate. In terms of biological role, catalyzes the conversion of glucosamine-6-phosphate to glucosamine-1-phosphate. The protein is Phosphoglucosamine mutase of Brucella canis (strain ATCC 23365 / NCTC 10854 / RM-666).